A 374-amino-acid polypeptide reads, in one-letter code: All-trans-retinol dehydrogenase [NAD(+)] ADH7 (374 aa).

Zn(2+) is bound by residues C47, H68, C98, C101, C104, C112, and C174. NAD(+)-binding positions include 199–204 (GLGGVG), D223, K228, 292–294 (VGA), and R369.

This sequence belongs to the zinc-containing alcohol dehydrogenase family. Class-IV subfamily. In terms of assembly, homodimer. The cofactor is Zn(2+). As to expression, high expression in the stomach mucosa. Lower expression in eye, thymus, skin and ovary. Very low expression in small intestine, liver and uterus.

The protein resides in the cytoplasm. The catalysed reaction is a primary alcohol + NAD(+) = an aldehyde + NADH + H(+). It carries out the reaction 10-hydroxydecanoate + NAD(+) = 10-oxodecanoate + NADH + H(+). The enzyme catalyses all-trans-retinol + NAD(+) = all-trans-retinal + NADH + H(+). It catalyses the reaction 9-cis-retinol + NAD(+) = 9-cis-retinal + NADH + H(+). The catalysed reaction is all-trans-3,4-didehydroretinol + NAD(+) = all-trans-3,4-didehydroretinal + NADH + H(+). It carries out the reaction all-trans-4-hydroxyretinol + NAD(+) = all-trans-4-hydroxyretinal + NADH + H(+). The enzyme catalyses all-trans-4-oxoretinol + NAD(+) = all-trans-4-oxoretinal + NADH + H(+). It catalyses the reaction 12-hydroxydodecanoate + NAD(+) = 12-oxododecanoate + NADH + H(+). The catalysed reaction is 16-hydroxyhexadecanoate + NAD(+) = 16-oxohexadecanoate + NADH + H(+). It carries out the reaction hexan-1-ol + NAD(+) = hexanal + NADH + H(+). The enzyme catalyses (E)-hex-2-en-1-ol + NAD(+) = (E)-hex-2-enal + NADH + H(+). It catalyses the reaction (E)-4-hydroxynon-2-en-1-ol + NAD(+) = (E)-4-hydroxynon-2-enal + NADH + H(+). Retinol oxidation is inhibited by the detergent Tween 80. Ethanol inhibits both all-trans-retinol and 9-cis-retinol oxidation. 13-cis-retinol is an effective competitive inhibitor of the 9-cis-retinol oxidation. All-trans-retinoic acid is a powerful inhibitor of all-trans-retinol oxidation. 13-cis-retinoic acid is a powerful inhibitor of all-trans-retinol oxidation. Cimetidine competitively inhibited ethanol oxidation. Functionally, catalyzes the NAD-dependent oxidation of all-trans-retinol, alcohol, aldehyde and omega-hydroxy fatty acids and their derivatives. Oxidizes preferentially all trans-retinol, all-trans-4-hydroxyretinol, 9-cis-retinol, 2-hexenol, and long chain omega-hydroxy fatty acids such as juniperic acid. In vitro can also catalyze the NADH-dependent reduction of all-trans-retinal and aldehydes and their derivatives. Reduces preferentially all trans-retinal, all-trans-4-oxoretinal and hexanal. Catalyzes in the oxidative direction with higher efficiency. Therefore may participate in retinoid metabolism, fatty acid omega-oxidation, and elimination of cytotoxic aldehydes produced by lipid peroxidation. The sequence is that of All-trans-retinol dehydrogenase [NAD(+)] ADH7 (Adh7) from Mus musculus (Mouse).